Consider the following 373-residue polypeptide: tRNA (guanine(26)-N(2))-dimethyltransferase (373 aa).

Residues 2 to 365 enclose the Trm1 methyltransferase domain; sequence KIISEGETKL…AELSDLVVLI (364 aa). S-adenosyl-L-methionine contacts are provided by R35, R66, D86, D113, and A114.

The protein belongs to the class I-like SAM-binding methyltransferase superfamily. Trm1 family.

The enzyme catalyses guanosine(26) in tRNA + 2 S-adenosyl-L-methionine = N(2)-dimethylguanosine(26) in tRNA + 2 S-adenosyl-L-homocysteine + 2 H(+). Its function is as follows. Dimethylates a single guanine residue at position 26 of a number of tRNAs using S-adenosyl-L-methionine as donor of the methyl groups. The protein is tRNA (guanine(26)-N(2))-dimethyltransferase of Methanococcus maripaludis (Methanococcus deltae).